Consider the following 228-residue polypeptide: Sec-independent protein translocase protein TatB (228 aa).

A helical membrane pass occupies residues 1-21; the sequence is MFDFGLGELIFVGIIALIVLG. 2 disordered regions span residues 106 to 164 and 196 to 228; these read TPAD…TDKD and VPHT…VRKS. The span at 135 to 151 shows a compositional bias: basic and acidic residues; sequence PSERSDTSAETLGDDRQ. Residues 206–228 show a composition bias toward basic residues; that stretch reads AINRKRDFRPKHRAKPKLRVRKS.

The protein belongs to the TatB family. The Tat system comprises two distinct complexes: a TatABC complex, containing multiple copies of TatA, TatB and TatC subunits, and a separate TatA complex, containing only TatA subunits. Substrates initially bind to the TatABC complex, which probably triggers association of the separate TatA complex to form the active translocon.

It localises to the cell inner membrane. In terms of biological role, part of the twin-arginine translocation (Tat) system that transports large folded proteins containing a characteristic twin-arginine motif in their signal peptide across membranes. Together with TatC, TatB is part of a receptor directly interacting with Tat signal peptides. TatB may form an oligomeric binding site that transiently accommodates folded Tat precursor proteins before their translocation. This is Sec-independent protein translocase protein TatB from Neisseria gonorrhoeae (strain ATCC 700825 / FA 1090).